A 271-amino-acid polypeptide reads, in one-letter code: Chorismate dehydratase (271 aa).

Belongs to the MqnA/MqnD family. MqnA subfamily.

It catalyses the reaction chorismate = 3-[(1-carboxyvinyl)-oxy]benzoate + H2O. It participates in quinol/quinone metabolism; menaquinone biosynthesis. Its function is as follows. Catalyzes the dehydration of chorismate into 3-[(1-carboxyvinyl)oxy]benzoate, a step in the biosynthesis of menaquinone (MK, vitamin K2). The chain is Chorismate dehydratase from Thermus thermophilus (strain ATCC 27634 / DSM 579 / HB8).